The primary structure comprises 348 residues: Protein RecA (348 aa).

Gly-67–Thr-74 lines the ATP pocket.

This sequence belongs to the RecA family.

It is found in the cytoplasm. In terms of biological role, can catalyze the hydrolysis of ATP in the presence of single-stranded DNA, the ATP-dependent uptake of single-stranded DNA by duplex DNA, and the ATP-dependent hybridization of homologous single-stranded DNAs. It interacts with LexA causing its activation and leading to its autocatalytic cleavage. The sequence is that of Protein RecA from Salinispora tropica (strain ATCC BAA-916 / DSM 44818 / JCM 13857 / NBRC 105044 / CNB-440).